The chain runs to 317 residues: UV DNA damage endonuclease (317 aa).

The protein belongs to the uve1/UvsE family.

Functionally, component in a DNA repair pathway. Removal of UV LIGHT damaged nucleotides. Recognizes pyrimidine dimers and cleave a phosphodiester bond immediately 5' to the lesion. In Bacillus cereus (strain B4264), this protein is UV DNA damage endonuclease.